The following is a 445-amino-acid chain: 6-phosphogluconate dehydrogenase, decarboxylating (445 aa).

NADP(+)-binding positions include 1–4 (AVMG), 22–24 (NRS), 63–65 (VQA), and Asn91. Substrate is bound by residues Asn91 and 117-119 (SGG). Lys172 acts as the Proton acceptor in catalysis. Substrate is bound at residue 175–176 (HN). The Proton donor role is filled by Glu179. 5 residues coordinate substrate: Tyr180, Lys249, Arg276, Arg434, and His440.

Belongs to the 6-phosphogluconate dehydrogenase family. Homodimer.

The catalysed reaction is 6-phospho-D-gluconate + NADP(+) = D-ribulose 5-phosphate + CO2 + NADPH. It participates in carbohydrate degradation; pentose phosphate pathway; D-ribulose 5-phosphate from D-glucose 6-phosphate (oxidative stage): step 3/3. Its function is as follows. Catalyzes the oxidative decarboxylation of 6-phosphogluconate to ribulose 5-phosphate and CO(2), with concomitant reduction of NADP to NADPH. The sequence is that of 6-phosphogluconate dehydrogenase, decarboxylating (gnd) from Pseudescherichia vulneris (Escherichia vulneris).